Consider the following 282-residue polypeptide: Elongation factor Ts (282 aa).

An involved in Mg(2+) ion dislocation from EF-Tu region spans residues 80–83; that stretch reads TDFV.

Belongs to the EF-Ts family.

Its subcellular location is the cytoplasm. Associates with the EF-Tu.GDP complex and induces the exchange of GDP to GTP. It remains bound to the aminoacyl-tRNA.EF-Tu.GTP complex up to the GTP hydrolysis stage on the ribosome. The chain is Elongation factor Ts from Protochlamydia amoebophila (strain UWE25).